The following is a 179-amino-acid chain: Bacterioferritin (179 aa).

One can recognise a Ferritin-like diiron domain in the interval 1-150; sequence MAGNREDRKA…NIGSHIKNLG (150 aa). Fe cation contacts are provided by glutamate 23 and glutamate 56. Methionine 57 contributes to the Fe-coproporphyrin III binding site. Residues histidine 59, glutamate 99, glutamate 132, and histidine 135 each coordinate Fe cation.

It belongs to the bacterioferritin family. In terms of assembly, homooligomer of 24 subunits, arranged as 12 dimers, that are packed together to form an approximately spherical molecule with a central cavity, in which large amounts of iron can be deposited. It depends on Fe-coproporphyrin III as a cofactor. The cofactor is Fe cation.

The catalysed reaction is 4 Fe(2+) + O2 + 4 H(+) = 4 Fe(3+) + 2 H2O. It catalyses the reaction Fe(2+)(in) = Fe(2+)(out). Iron-storage protein, whose ferroxidase center binds Fe(2+), oxidizes it using dioxygen to Fe(3+), and participates in the subsequent Fe(3+) oxide mineral core formation within the central cavity of the BFR protein shell. The sequence is that of Bacterioferritin (bfr) from Desulfovibrio desulfuricans (strain ATCC 27774 / DSM 6949 / MB).